Here is a 367-residue protein sequence, read N- to C-terminus: Aminomethyltransferase (367 aa).

The protein belongs to the GcvT family. The glycine cleavage system is composed of four proteins: P, T, L and H.

The catalysed reaction is N(6)-[(R)-S(8)-aminomethyldihydrolipoyl]-L-lysyl-[protein] + (6S)-5,6,7,8-tetrahydrofolate = N(6)-[(R)-dihydrolipoyl]-L-lysyl-[protein] + (6R)-5,10-methylene-5,6,7,8-tetrahydrofolate + NH4(+). In terms of biological role, the glycine cleavage system catalyzes the degradation of glycine. The sequence is that of Aminomethyltransferase from Mycolicibacterium paratuberculosis (strain ATCC BAA-968 / K-10) (Mycobacterium paratuberculosis).